The sequence spans 520 residues: Amine oxidase [flavin-containing] B (520 aa).

Ser2 bears the N-acetylserine mark. The Cytoplasmic segment spans residues Ser2 to Val489. Lys52 is subject to N6-acetyllysine. Cys397 carries the S-8alpha-FAD cysteine modification. Residues Pro490–Leu516 form a helical; Anchor for type IV membrane protein membrane-spanning segment. Topologically, residues Leu517–Val520 are mitochondrial intermembrane.

As to quaternary structure, monomer, homo- or heterodimer (containing two subunits of similar size). Each subunit contains a covalently bound flavin. Enzymatically active as monomer. Requires FAD as cofactor.

It localises to the mitochondrion outer membrane. The enzyme catalyses a secondary aliphatic amine + O2 + H2O = a primary amine + an aldehyde + H2O2. The catalysed reaction is (R)-adrenaline + O2 + H2O = (R)-3,4-dihydroxymandelaldehyde + methylamine + H2O2. It catalyses the reaction a primary methyl amine + O2 + H2O = an aldehyde + H2O2 + NH4(+). It carries out the reaction benzylamine + O2 + H2O = benzaldehyde + H2O2 + NH4(+). The enzyme catalyses dopamine + O2 + H2O = 3,4-dihydroxyphenylacetaldehyde + H2O2 + NH4(+). The catalysed reaction is tyramine + O2 + H2O = (4-hydroxyphenyl)acetaldehyde + H2O2 + NH4(+). It catalyses the reaction (R)-noradrenaline + O2 + H2O = (R)-3,4-dihydroxymandelaldehyde + H2O2 + NH4(+). It carries out the reaction 2-phenylethylamine + O2 + H2O = 2-phenylacetaldehyde + H2O2 + NH4(+). The enzyme catalyses N-acetylputrescine + O2 + H2O = 4-acetamidobutanal + H2O2 + NH4(+). With respect to regulation, inhibited by deprenyl. Functionally, catalyzes the oxidative deamination of primary and some secondary amines such as neurotransmitters, and exogenous amines including the tertiary amine, neurotoxin 1-methyl-4-phenyl-1,2,3,6-tetrahydropyridine (MPTP), with concomitant reduction of oxygen to hydrogen peroxide and participates in the metabolism of neuroactive and vasoactive amines in the central nervous system and peripheral tissues. Preferentially degrades benzylamine and phenylethylamine. The chain is Amine oxidase [flavin-containing] B from Homo sapiens (Human).